The primary structure comprises 393 residues: S-adenosylmethionine synthase (393 aa).

His16 is a binding site for ATP. Residue Asp18 coordinates Mg(2+). Glu44 provides a ligand contact to K(+). L-methionine is bound by residues Glu57 and Gln100. The tract at residues 100–110 (QSNDIAQGVDH) is flexible loop. ATP is bound by residues 167-169 (DAK), 238-239 (RF), Asp247, 253-254 (RK), Ala270, and Lys274. L-methionine is bound at residue Asp247. Residue Lys278 participates in L-methionine binding.

Belongs to the AdoMet synthase family. In terms of assembly, homotetramer; dimer of dimers. Mg(2+) is required as a cofactor. It depends on K(+) as a cofactor.

It is found in the cytoplasm. The enzyme catalyses L-methionine + ATP + H2O = S-adenosyl-L-methionine + phosphate + diphosphate. It functions in the pathway amino-acid biosynthesis; S-adenosyl-L-methionine biosynthesis; S-adenosyl-L-methionine from L-methionine: step 1/1. Its function is as follows. Catalyzes the formation of S-adenosylmethionine (AdoMet) from methionine and ATP. The overall synthetic reaction is composed of two sequential steps, AdoMet formation and the subsequent tripolyphosphate hydrolysis which occurs prior to release of AdoMet from the enzyme. The polypeptide is S-adenosylmethionine synthase (Paracidovorax citrulli (strain AAC00-1) (Acidovorax citrulli)).